Reading from the N-terminus, the 511-residue chain is UDP-N-acetylhexosamine pyrophosphorylase-like protein 1 (511 aa).

The span at 1-19 shows a compositional bias: basic and acidic residues; sequence MDRSESAESAESRRRRAEE. The disordered stretch occupies residues 1–22; it reads MDRSESAESAESRRRRAEESGQ. The short motif at 117 to 120 is the Substrate binding element; the sequence is LAGG. UTP contacts are provided by residues 117 to 120, Lys131, Gln205, and Gly231; that span reads LAGG. Residue Asn232 coordinates substrate. Asp262 contacts UTP. The Substrate binding motif lies at 312–313; that stretch reads EY. A UTP-binding site is contributed by Lys386. A substrate-binding site is contributed by Lys416.

The protein belongs to the UDPGP type 1 family.

In Xenopus tropicalis (Western clawed frog), this protein is UDP-N-acetylhexosamine pyrophosphorylase-like protein 1 (uap1l1).